The chain runs to 342 residues: Isopentenyl-diphosphate delta-isomerase (342 aa).

Residue 11-12 participates in substrate binding; that stretch reads RK. Residues S68, 69–71, S99, and N128 contribute to the FMN site; that span reads SMT. Residue 99-101 participates in substrate binding; it reads SQR. Q162 contributes to the substrate binding site. A Mg(2+)-binding site is contributed by E163. Residues K194, S219, T224, 275 to 277, and 296 to 297 each bind FMN; these read GVR and AK.

Belongs to the IPP isomerase type 2 family. Homooctamer. Dimer of tetramers. It depends on FMN as a cofactor. The cofactor is NADPH. Mg(2+) serves as cofactor.

It is found in the cytoplasm. The enzyme catalyses isopentenyl diphosphate = dimethylallyl diphosphate. Functionally, involved in the biosynthesis of isoprenoids. Catalyzes the 1,3-allylic rearrangement of the homoallylic substrate isopentenyl (IPP) to its allylic isomer, dimethylallyl diphosphate (DMAPP). This is Isopentenyl-diphosphate delta-isomerase from Legionella pneumophila (strain Lens).